Consider the following 335-residue polypeptide: Probable deoxyhypusine synthase (335 aa).

K308 (nucleophile) is an active-site residue.

The protein belongs to the deoxyhypusine synthase family. Requires NAD(+) as cofactor.

The catalysed reaction is [eIF5A protein]-L-lysine + spermidine = [eIF5A protein]-deoxyhypusine + propane-1,3-diamine. The protein operates within protein modification; eIF5A hypusination. Its function is as follows. Catalyzes the NAD-dependent oxidative cleavage of spermidine and the subsequent transfer of the butylamine moiety of spermidine to the epsilon-amino group of a specific lysine residue of the eIF-5A precursor protein to form the intermediate deoxyhypusine residue. In Thermococcus onnurineus (strain NA1), this protein is Probable deoxyhypusine synthase.